The sequence spans 210 residues: Putative 4-hydroxy-4-methyl-2-oxoglutarate aldolase (210 aa).

Substrate contacts are provided by residues 87-90 and Arg109; that span reads GDFV. An a divalent metal cation-binding site is contributed by Asp110.

It belongs to the class II aldolase/RraA-like family. Homotrimer. A divalent metal cation serves as cofactor.

It carries out the reaction 4-hydroxy-4-methyl-2-oxoglutarate = 2 pyruvate. It catalyses the reaction oxaloacetate + H(+) = pyruvate + CO2. Catalyzes the aldol cleavage of 4-hydroxy-4-methyl-2-oxoglutarate (HMG) into 2 molecules of pyruvate. Also contains a secondary oxaloacetate (OAA) decarboxylase activity due to the common pyruvate enolate transition state formed following C-C bond cleavage in the retro-aldol and decarboxylation reactions. The protein is Putative 4-hydroxy-4-methyl-2-oxoglutarate aldolase of Halalkalibacterium halodurans (strain ATCC BAA-125 / DSM 18197 / FERM 7344 / JCM 9153 / C-125) (Bacillus halodurans).